A 723-amino-acid chain; its full sequence is Polyribonucleotide nucleotidyltransferase (723 aa).

Mg(2+)-binding residues include D488 and D494. One can recognise a KH domain in the interval 555–614 (PKIITLNIKPEKIKDVIGPGGKQINAIIEETGVKIDIEQDGTVYIASQDQAMNRKAIAII). The S1 motif domain occupies 624 to 692 (GEVYTGKVRR…HQGRVNLSRK (69 aa)). Residues 692 to 723 (KALLEKKEQPEGDKKPQAEKKFYPKTKKPESK) are disordered. Residues 693 to 723 (ALLEKKEQPEGDKKPQAEKKFYPKTKKPESK) show a composition bias toward basic and acidic residues.

It belongs to the polyribonucleotide nucleotidyltransferase family. Mg(2+) is required as a cofactor.

The protein resides in the cytoplasm. It carries out the reaction RNA(n+1) + phosphate = RNA(n) + a ribonucleoside 5'-diphosphate. Functionally, involved in mRNA degradation. Catalyzes the phosphorolysis of single-stranded polyribonucleotides processively in the 3'- to 5'-direction. The protein is Polyribonucleotide nucleotidyltransferase of Listeria innocua serovar 6a (strain ATCC BAA-680 / CLIP 11262).